The chain runs to 375 residues: FAD-dependent catabolic D-arginine dehydrogenase DauA (375 aa).

FAD-binding positions include alanine 14, 32-33 (ER), 41-48 (STGRSAAH), alanine 171, and 331-336 (GGYGIQ).

The protein belongs to the FAD-dependent glycerol-3-phosphate dehydrogenase family. In terms of assembly, monomer. It depends on FAD as a cofactor.

It carries out the reaction D-arginine + A + H2O = 5-guanidino-2-oxopentanoate + AH2 + NH4(+). The catalysed reaction is a D-alpha-amino acid + A + H2O = a 2-oxocarboxylate + AH2 + NH4(+). With respect to regulation, inhibited by D-arginine and D-lysine at high concentration. Functionally, dauA is highly expressed within the cystic fibrosis (CF) lung, and it is required for virulence via the optimal production of hydrogen cyanide, pyocyanine, pyoverdine, rhamnolipid and alginate during biofilm formation. Involved in the catabolism of D-lysine and D-arginine. Under aerobic conditions, the arginine succinyltransferase (AST) and arginine transaminase (ATA) pathways are 2 major routes for L-arginine utilization as the sole source of carbon and nitrogen. The D-to-L racemization of arginine by DauA and DauB is necessary, before to be channeled into the AST and/or ATA pathways. DauA catalyzes the flavin-dependent oxidative deamination of D-arginine into 2-ketoarginine (2-KA) and ammonia. It also has dehydrogenase activity towards D-lysine, D-tyrosine, D-methionine, D-phenylalanine, D-ornithine, D-histidine and D-leucine as substrates. The sequence is that of FAD-dependent catabolic D-arginine dehydrogenase DauA from Pseudomonas aeruginosa (strain ATCC 15692 / DSM 22644 / CIP 104116 / JCM 14847 / LMG 12228 / 1C / PRS 101 / PAO1).